Consider the following 144-residue polypeptide: Large ribosomal subunit protein uL16 (144 aa).

It belongs to the universal ribosomal protein uL16 family. In terms of assembly, part of the 50S ribosomal subunit.

In terms of biological role, binds 23S rRNA and is also seen to make contacts with the A and possibly P site tRNAs. This chain is Large ribosomal subunit protein uL16, found in Erythrobacter litoralis (strain HTCC2594).